The sequence spans 72 residues: Putative snRNP Sm-like protein (72 aa).

Positions 4–72 (RPLDILNNAL…RGDNVVYVSP (69 aa)) constitute a Sm domain.

Belongs to the snRNP Sm proteins family.

This is Putative snRNP Sm-like protein from Methanosarcina barkeri (strain Fusaro / DSM 804).